We begin with the raw amino-acid sequence, 343 residues long: UDP-3-O-(3-hydroxymyristoyl)glucosamine N-acyltransferase (343 aa).

Catalysis depends on histidine 239, which acts as the Proton acceptor.

Belongs to the transferase hexapeptide repeat family. LpxD subfamily. In terms of assembly, homotrimer.

It catalyses the reaction a UDP-3-O-[(3R)-3-hydroxyacyl]-alpha-D-glucosamine + a (3R)-hydroxyacyl-[ACP] = a UDP-2-N,3-O-bis[(3R)-3-hydroxyacyl]-alpha-D-glucosamine + holo-[ACP] + H(+). The catalysed reaction is UDP-3-O-[(3R)-3-hydroxytetradecanoyl]-alpha-D-glucosamine + (3R)-hydroxytetradecanoyl-[ACP] = UDP-2-N,3-O-bis[(3R)-3-hydroxytetradecanoyl]-alpha-D-glucosamine + holo-[ACP] + H(+). Its pathway is glycolipid biosynthesis; lipid IV(A) biosynthesis; lipid IV(A) from (3R)-3-hydroxytetradecanoyl-[acyl-carrier-protein] and UDP-N-acetyl-alpha-D-glucosamine: step 3/6. Its function is as follows. Catalyzes the N-acylation of UDP-3-O-(hydroxytetradecanoyl)glucosamine using 3-hydroxytetradecanoyl-ACP as the acyl donor. Is involved in the biosynthesis of lipid A, a phosphorylated glycolipid that anchors the lipopolysaccharide to the outer membrane of the cell. This Blochmanniella pennsylvanica (strain BPEN) protein is UDP-3-O-(3-hydroxymyristoyl)glucosamine N-acyltransferase.